Here is a 437-residue protein sequence, read N- to C-terminus: GTPase Der (437 aa).

EngA-type G domains lie at 3-168 (PLIA…PESE) and 178-353 (VKLA…RNRS). GTP is bound by residues 9–16 (GRPNVGKS), 56–60 (DTGGY), 120–123 (NKVE), 184–191 (GRPNVGKS), 231–235 (DTAGL), and 296–299 (NKWD). Residues 354 to 437 (RKISTSSLNR…VPISLRFMEK (84 aa)) enclose the KH-like domain.

It belongs to the TRAFAC class TrmE-Era-EngA-EngB-Septin-like GTPase superfamily. EngA (Der) GTPase family. In terms of assembly, associates with the 50S ribosomal subunit.

Its function is as follows. GTPase that plays an essential role in the late steps of ribosome biogenesis. The protein is GTPase Der of Chlorobium limicola (strain DSM 245 / NBRC 103803 / 6330).